Reading from the N-terminus, the 49-residue chain is Large ribosomal subunit protein bL33B (49 aa).

The protein belongs to the bacterial ribosomal protein bL33 family.

The chain is Large ribosomal subunit protein bL33B from Exiguobacterium sibiricum (strain DSM 17290 / CCUG 55495 / CIP 109462 / JCM 13490 / 255-15).